Reading from the N-terminus, the 218-residue chain is Glutathione S-transferase Y1 (218 aa).

Positions 2–88 (PMILGYWNVR…YIARKHNLCG (87 aa)) constitute a GST N-terminal domain. Glutathione is bound by residues 7-8 (YW), 46-50 (WLNEK), 59-60 (NL), and 72-73 (QS). Residues 90 to 208 (TEEERIRVDI…KTSRFLRRPI (119 aa)) enclose the GST C-terminal domain. Tyr116 serves as a coordination point for substrate.

The protein belongs to the GST superfamily. Mu family. In terms of assembly, homodimer.

Its subcellular location is the cytoplasm. The catalysed reaction is RX + glutathione = an S-substituted glutathione + a halide anion + H(+). Conjugation of reduced glutathione to a wide number of exogenous and endogenous hydrophobic electrophiles. This Cricetulus longicaudatus (Long-tailed dwarf hamster) protein is Glutathione S-transferase Y1.